A 123-amino-acid chain; its full sequence is T-complex protein 1 subunit alpha (123 aa).

Gly-68 provides a ligand contact to ADP.

The protein belongs to the TCP-1 chaperonin family. Component of the chaperonin-containing T-complex (TRiC), a hexadecamer composed of two identical back-to-back stacked rings enclosing a protein folding chamber. Each ring is made up of eight different subunits: TCP1/CCT1, CCT2, CCT3, CCT4, CCT5, CCT6A/CCT6, CCT7, CCT8. Interacts with PACRG. Interacts with GBA1. Interacts with DLEC1.

It is found in the cytoplasm. It localises to the cytosol. The protein localises to the cytoskeleton. The protein resides in the microtubule organizing center. Its subcellular location is the centrosome. The enzyme catalyses ATP + H2O = ADP + phosphate + H(+). Functionally, component of the chaperonin-containing T-complex (TRiC), a molecular chaperone complex that assists the folding of actin, tubulin and other proteins upon ATP hydrolysis. The TRiC complex mediates the folding of WRAP53/TCAB1, thereby regulating telomere maintenance. As part of the TRiC complex may play a role in the assembly of BBSome, a complex involved in ciliogenesis regulating transports vesicles to the cilia. This is T-complex protein 1 subunit alpha from Mesocricetus auratus (Golden hamster).